The following is a 347-amino-acid chain: Single-pass membrane and coiled-coil domain-containing protein 2 (347 aa).

A disordered region spans residues 1–89 (MMSLQLGTAG…PPSKPDEQEV (89 aa)). 3 stretches are compositionally biased toward basic and acidic residues: residues 10–21 (GKERQLAEKSRD), 36–51 (EMDHISDRPDEKDKPS), and 60–86 (YKMDTEKWDGLEQESEHSQDPPSKPDE). Residues 139-238 (DWLERINNII…MNVLNSKLEM (100 aa)) adopt a coiled-coil conformation. Serine 178 carries the post-translational modification Phosphoserine. The tract at residues 243-274 (GSDADSHNSEDVDTEQEEPLVPEASPSLSASP) is disordered. The span at 253-262 (DVDTEQEEPL) shows a compositional bias: acidic residues. Over residues 263–273 (VPEASPSLSAS) the composition is skewed to low complexity. The chain crosses the membrane as a helical span at residues 288–308 (LFVIVYVVTITGLSCYILFVD).

It is found in the membrane. In Mus musculus (Mouse), this protein is Single-pass membrane and coiled-coil domain-containing protein 2 (Smco2).